A 739-amino-acid chain; its full sequence is Phosphoribosylformylglycinamidine synthase subunit PurL (739 aa).

His54 is an active-site residue. ATP is bound by residues Tyr57 and Lys96. Glu98 is a Mg(2+) binding site. Substrate-binding positions include 99-102 (SHNH) and Arg121. The active-site Proton acceptor is the His100. Asp122 is a Mg(2+) binding site. Gln245 serves as a coordination point for substrate. Asp273 is a binding site for Mg(2+). 317–319 (ESQ) serves as a coordination point for substrate. Asp500 and Gly537 together coordinate ATP. Mg(2+) is bound at residue Asn538. Ser540 is a substrate binding site.

Belongs to the FGAMS family. As to quaternary structure, monomer. Part of the FGAM synthase complex composed of 1 PurL, 1 PurQ and 2 PurS subunits.

Its subcellular location is the cytoplasm. The enzyme catalyses N(2)-formyl-N(1)-(5-phospho-beta-D-ribosyl)glycinamide + L-glutamine + ATP + H2O = 2-formamido-N(1)-(5-O-phospho-beta-D-ribosyl)acetamidine + L-glutamate + ADP + phosphate + H(+). It participates in purine metabolism; IMP biosynthesis via de novo pathway; 5-amino-1-(5-phospho-D-ribosyl)imidazole from N(2)-formyl-N(1)-(5-phospho-D-ribosyl)glycinamide: step 1/2. Part of the phosphoribosylformylglycinamidine synthase complex involved in the purines biosynthetic pathway. Catalyzes the ATP-dependent conversion of formylglycinamide ribonucleotide (FGAR) and glutamine to yield formylglycinamidine ribonucleotide (FGAM) and glutamate. The FGAM synthase complex is composed of three subunits. PurQ produces an ammonia molecule by converting glutamine to glutamate. PurL transfers the ammonia molecule to FGAR to form FGAM in an ATP-dependent manner. PurS interacts with PurQ and PurL and is thought to assist in the transfer of the ammonia molecule from PurQ to PurL. The sequence is that of Phosphoribosylformylglycinamidine synthase subunit PurL from Bacillus cereus (strain ATCC 10987 / NRS 248).